The chain runs to 463 residues: Exodeoxyribonuclease 7 large subunit (463 aa).

This sequence belongs to the XseA family. As to quaternary structure, heterooligomer composed of large and small subunits.

The protein localises to the cytoplasm. It carries out the reaction Exonucleolytic cleavage in either 5'- to 3'- or 3'- to 5'-direction to yield nucleoside 5'-phosphates.. Its function is as follows. Bidirectionally degrades single-stranded DNA into large acid-insoluble oligonucleotides, which are then degraded further into small acid-soluble oligonucleotides. The sequence is that of Exodeoxyribonuclease 7 large subunit from Klebsiella pneumoniae subsp. pneumoniae (strain ATCC 700721 / MGH 78578).